Reading from the N-terminus, the 303-residue chain is Scaffolding protein (303 aa).

Residues 1–74 (MEPTTEIQAT…RRRIERKRQR (74 aa)) form a post-transcriptional autoregulatory domain region. Positions 275–303 (AIRKQMDAAASKGDVETYRKLKAKLKGIR) are interaction with the capsid protein.

Homodimer. Homotetramer. Interacts with the portal protein; this interaction initiates procapsid assembly, thereby ensuring incorporation of only one portal ring per capsid. Interacts (via C-terminus) with the capsid protein; this interaction allow to form the procapsid, in which the scaffolding protein forms an internal shell in the icosahedrally arranged capsid protein subunits.

Required for procapsid assembly. The interior of the prohead is filled with the scaffolding protein. The scaffolding protein is lost from the structure during packaging. Scaffolding protein exit is followed by the expansion of the procapsid into a mature capsid. The sequence is that of Scaffolding protein (8) from Salmonella typhimurium (Bacteriophage P22).